A 363-amino-acid polypeptide reads, in one-letter code: Small ribosomal subunit biogenesis GTPase RsgA (363 aa).

A CP-type G domain is found at 112–268; it reads HQQVIAANID…LIDTPGMREL (157 aa). GTP contacts are provided by residues 157–160 and 210–218; these read TKAD and GSSGAGKST. Cysteine 291, cysteine 296, histidine 298, and cysteine 304 together coordinate Zn(2+). The disordered stretch occupies residues 340 to 363; the sequence is RVAQNNRGKGSGKRPASIDRPGRR.

The protein belongs to the TRAFAC class YlqF/YawG GTPase family. RsgA subfamily. In terms of assembly, monomer. Associates with 30S ribosomal subunit, binds 16S rRNA. Requires Zn(2+) as cofactor.

It is found in the cytoplasm. Its function is as follows. One of several proteins that assist in the late maturation steps of the functional core of the 30S ribosomal subunit. Helps release RbfA from mature subunits. May play a role in the assembly of ribosomal proteins into the subunit. Circularly permuted GTPase that catalyzes slow GTP hydrolysis, GTPase activity is stimulated by the 30S ribosomal subunit. This is Small ribosomal subunit biogenesis GTPase RsgA from Xanthomonas oryzae pv. oryzae (strain PXO99A).